Here is a 107-residue protein sequence, read N- to C-terminus: U1-lycotoxin-Ls1x (107 aa).

Positions 1–20 are cleaved as a signal peptide; it reads MMKVLVVVALLVTLISYSSS. Residues 21-41 constitute a propeptide that is removed on maturation; that stretch reads EGIDDLEADELLSLMANEHPR. Disulfide bonds link Cys44–Cys59, Cys51–Cys68, Cys58–Cys86, and Cys70–Cys84.

This sequence belongs to the neurotoxin 19 (CSTX) family. 04 (U1-Lctx) subfamily. In terms of tissue distribution, expressed by the venom gland.

The protein localises to the secreted. The protein is U1-lycotoxin-Ls1x of Lycosa singoriensis (Wolf spider).